The primary structure comprises 206 residues: Inosine triphosphate pyrophosphatase (206 aa).

21–26 lines the ITP pocket; sequence TGNAKK. Glutamate 49 provides a ligand contact to Mg(2+). Residues lysine 61, 77-78, lysine 94, 153-156, lysine 176, and 181-182 each bind ITP; these read DT, FGWD, and HR.

It belongs to the HAM1 NTPase family. As to quaternary structure, homodimer. Requires Mg(2+) as cofactor. The cofactor is Mn(2+).

The protein resides in the cytoplasm. It catalyses the reaction ITP + H2O = IMP + diphosphate + H(+). The enzyme catalyses dITP + H2O = dIMP + diphosphate + H(+). The catalysed reaction is XTP + H2O = XMP + diphosphate + H(+). Pyrophosphatase that hydrolyzes non-canonical purine nucleotides such as inosine triphosphate (ITP), deoxyinosine triphosphate (dITP) or xanthosine 5'-triphosphate (XTP) to their respective monophosphate derivatives. The enzyme does not distinguish between the deoxy- and ribose forms. Probably excludes non-canonical purines from RNA and DNA precursor pools, thus preventing their incorporation into RNA and DNA and avoiding chromosomal lesions. This chain is Inosine triphosphate pyrophosphatase, found in Vitis vinifera (Grape).